A 444-amino-acid chain; its full sequence is Tubulin beta-7 chain (444 aa).

Gln11, Glu69, Ser138, Gly142, Thr143, Gly144, Asn204, and Asn226 together coordinate GTP. Residue Glu69 participates in Mg(2+) binding.

Belongs to the tubulin family. As to quaternary structure, dimer of alpha and beta chains. A typical microtubule is a hollow water-filled tube with an outer diameter of 25 nm and an inner diameter of 15 nM. Alpha-beta heterodimers associate head-to-tail to form protofilaments running lengthwise along the microtubule wall with the beta-tubulin subunit facing the microtubule plus end conferring a structural polarity. Microtubules usually have 13 protofilaments but different protofilament numbers can be found in some organisms and specialized cells. Requires Mg(2+) as cofactor.

The protein resides in the cytoplasm. It is found in the cytoskeleton. Its function is as follows. Tubulin is the major constituent of microtubules, a cylinder consisting of laterally associated linear protofilaments composed of alpha- and beta-tubulin heterodimers. Microtubules grow by the addition of GTP-tubulin dimers to the microtubule end, where a stabilizing cap forms. Below the cap, tubulin dimers are in GDP-bound state, owing to GTPase activity of alpha-tubulin. The chain is Tubulin beta-7 chain from Gossypium hirsutum (Upland cotton).